We begin with the raw amino-acid sequence, 265 residues long: Leucine-rich repeat-containing protein Bf66946 (265 aa).

The N-terminal stretch at 1–20 is a signal peptide; it reads MALRDIFLLSMAMTAVTVQA. 2 disulfide bridges follow: cysteine 21–cysteine 27 and cysteine 25–cysteine 39. The LRRNT domain maps to 21–50; the sequence is CPSACKCTVSLYGEMVVACGGMGLTEIPED. LRR repeat units follow at residues 51–75, 76–99, and 100–123; these read IPHRAVYLVLKDNNITKITSYSFKG, LRNLQGIDLSNNKINHISSAALRH, and LGHLDDIDLSRNELTSVSEKLFDF. Residue asparagine 64 is glycosylated (N-linked (GlcNAc...) asparagine). The region spanning 142–193 is the LRRCT domain; the sequence is NPWGCDCRMAWLAQELAGGSKTFGDRHMECATPAALAGRGLSEIPQTSFVCT. Disulfide bonds link cysteine 146–cysteine 171 and cysteine 148–cysteine 192. The helical transmembrane segment at 220-240 threads the bilayer; it reads VAVVFGCITGLVTILLLVLTA.

The protein localises to the cell membrane. Functionally, binds selectively to the Gram-positive bacteria S.aureus and S.pneumoniae. Does not adhere to the Gram-negative bacteria E.coli and S.enterica. Probably recognizes peptidoglycans expressed on the bacterial cell surface. This Branchiostoma floridae (Florida lancelet) protein is Leucine-rich repeat-containing protein Bf66946.